The following is an 897-amino-acid chain: 3'-5' exonuclease DinG (897 aa).

In terms of domain architecture, Exonuclease spans 8–161 (VVDLETTGNQ…DEDAATTAKL (154 aa)). One can recognise a Helicase ATP-binding domain in the interval 241-496 (SKAVDQLGLT…KAIDQLEKQR (256 aa)). An ATP-binding site is contributed by 276 to 283 (ASLGSGKS). Positions 448 to 451 (DEAH) match the DEAH box motif. Residues 703 to 893 (NIDEYVASIV…QFGKLLRQIQ (191 aa)) form the Helicase C-terminal domain.

This sequence belongs to the helicase family. DinG subfamily. Type 2 sub-subfamily.

3'-5' exonuclease. This chain is 3'-5' exonuclease DinG, found in Staphylococcus aureus (strain USA300).